Consider the following 324-residue polypeptide: MGPWGEPELLVWRPEAVASEPSVPVGLEVKLGALVLLLLLTLICSLVPVCVLRRSGANHEASASGQKALSLVSCFAGGVFLATCLLDLLPDYLAAIDEALEALHVTLQFPLQEFILAMGFFLVLVMEQITLAYKEQTSPPHPEETRALLGTVNGGPQHWHDGPGIPQAGGTPAAPSALRACVLVFSLALHSVFEGLAVGLQRDRARAMELCLALLLHKGILAVSLSLRLLQSHLRVQVVAGCGILFSCMTPLGIGLGAALAESAGPLHQLAQSVLEGMAAGTFLYITFLEILPQELATSEQRILKVILLLAGFALLTGLLFVQI.

Residues 1–30 (MGPWGEPELLVWRPEAVASEPSVPVGLEVK) lie on the Extracellular side of the membrane. The helical transmembrane segment at 31–51 (LGALVLLLLLTLICSLVPVCV) threads the bilayer. Topologically, residues 52 to 68 (LRRSGANHEASASGQKA) are cytoplasmic. Residues 69-89 (LSLVSCFAGGVFLATCLLDLL) form a helical membrane-spanning segment. At 90 to 104 (PDYLAAIDEALEALH) the chain is on the extracellular side. The helical transmembrane segment at 105–125 (VTLQFPLQEFILAMGFFLVLV) threads the bilayer. Residues 126-179 (MEQITLAYKEQTSPPHPEETRALLGTVNGGPQHWHDGPGIPQAGGTPAAPSALR) are Cytoplasmic-facing. The chain crosses the membrane as a helical span at residues 180–200 (ACVLVFSLALHSVFEGLAVGL). The Extracellular segment spans residues 201 to 206 (QRDRAR). A helical membrane pass occupies residues 207-227 (AMELCLALLLHKGILAVSLSL). The Cytoplasmic segment spans residues 228 to 237 (RLLQSHLRVQ). A helical transmembrane segment spans residues 238–258 (VVAGCGILFSCMTPLGIGLGA). The Extracellular portion of the chain corresponds to 259–272 (ALAESAGPLHQLAQ). A helical transmembrane segment spans residues 273-293 (SVLEGMAAGTFLYITFLEILP). Residues 294-303 (QELATSEQRI) are Cytoplasmic-facing. A helical transmembrane segment spans residues 304–324 (LKVILLLAGFALLTGLLFVQI).

It belongs to the ZIP transporter (TC 2.A.5) family. Ubiquitous, except in the pancreas. Highest levels seen in kidney, salivary gland and placenta.

The protein resides in the cell membrane. Its subcellular location is the endoplasmic reticulum membrane. It catalyses the reaction Zn(2+)(in) = Zn(2+)(out). In terms of biological role, transporter for the divalent cation Zn(2+). Mediates the influx of Zn(2+) into cells from extracellular space. The sequence is that of Zinc transporter ZIP1 (Slc39a1) from Mus musculus (Mouse).